The following is a 337-amino-acid chain: Homeobox protein knotted-1-like 4 (337 aa).

Disordered stretches follow at residues 1 to 56 (MEQQ…SFHE) and 159 to 190 (FTLD…GLPE). Residues 27–38 (PTSTSTSPAVPS) show a composition bias toward low complexity. In terms of domain architecture, ELK spans 200 to 220 (ELKSHLLNKYSGYLSSLWREL). Positions 221 to 284 (SKKKKKGKLP…NQRKRHWKPT (64 aa)) form a DNA-binding region, homeobox; TALE-type.

The protein belongs to the TALE/KNOX homeobox family.

The protein localises to the nucleus. The protein is Homeobox protein knotted-1-like 4 (OSH10) of Oryza sativa subsp. japonica (Rice).